Consider the following 118-residue polypeptide: T cell receptor gamma variable 3 (118 aa).

Positions 1-17 (MRWALLVLLAFLSPASQ) are cleaved as a signal peptide. Residues 18–118 (KSSNLEGRTK…GVYYCATWDR (101 aa)) form the Ig-like domain. An intrachain disulfide couples Cys-41 to Cys-113. Residue Asn-106 is glycosylated (N-linked (GlcNAc...) asparagine).

Gamma-delta TR is a heterodimer composed of a gamma and delta chain; disulfide-linked. The gamma-delta TR is associated with the transmembrane signaling CD3 coreceptor proteins following the stoichiometry: a single gamma-delta TR heterodimer associates with one CD3D-CD3E heterodimer, one CD3G-CD3E heterodimer and one CD247 homodimer forming a stable octameric structure. Upon activation, gamma-delta TR complex associates with FCER1G to initiate intracellular signaling.

The protein resides in the cell membrane. V region of the variable domain of T cell receptor (TR) gamma chain that participates in the antigen recognition. Gamma-delta TRs recognize a variety of self and foreign non-peptide antigens frequently expressed at the epithelial boundaries between the host and external environment, including endogenous lipids presented by MH-like protein CD1D and phosphoantigens presented by butyrophilin-like molecule BTN3A1. Upon antigen recognition induces rapid, innate-like immune responses involved in pathogen clearance and tissue repair. Binding of gamma-delta TR complex to antigen triggers phosphorylation of immunoreceptor tyrosine-based activation motifs (ITAMs) in the CD3 chains by the LCK and FYN kinases, allowing the recruitment, phosphorylation, and activation of ZAP70 that facilitates phosphorylation of the scaffolding proteins LCP2 and LAT. This lead to the formation of a supramolecular signalosome that recruits the phospholipase PLCG1, resulting in calcium mobilization and ERK activation, ultimately leading to T cell expansion and differentiation into effector cells. Gamma-delta TRs are produced through somatic rearrangement of a limited repertoire of variable (V), diversity (D), and joining (J) genes. The potential diversity of gamma-delta TRs is conferred by the unique ability to rearrange (D) genes in tandem and to utilize all three reading frames. The combinatorial diversity is considerably increased by the sequence exonuclease trimming and random nucleotide (N) region additions which occur during the V-(D)-J rearrangements. The sequence is that of T cell receptor gamma variable 3 from Homo sapiens (Human).